Consider the following 144-residue polypeptide: Peptide methionine sulfoxide reductase MsrB (144 aa).

Residues 1 to 12 (MDKQQGELRQRL) show a composition bias toward basic and acidic residues. A disordered region spans residues 1-25 (MDKQQGELRQRLTPEQYAVTQEAAT). The region spanning 5-128 (QGELRQRLTP…NSAALKFIPV (124 aa)) is the MsrB domain. C117 acts as the Nucleophile in catalysis.

It belongs to the MsrB Met sulfoxide reductase family.

The enzyme catalyses L-methionyl-[protein] + [thioredoxin]-disulfide + H2O = L-methionyl-(R)-S-oxide-[protein] + [thioredoxin]-dithiol. The polypeptide is Peptide methionine sulfoxide reductase MsrB (Lactiplantibacillus plantarum (strain ATCC BAA-793 / NCIMB 8826 / WCFS1) (Lactobacillus plantarum)).